A 1311-amino-acid polypeptide reads, in one-letter code: Suppressor of presenilin protein 4 (1311 aa).

Positions 1-11 are enriched in polar residues; the sequence is MSSEPTSSIES. 2 disordered regions span residues 1–58 and 75–95; these read MSSE…DDLN and MFED…STAH. 2 consecutive C2H2-type zinc fingers follow at residues 112-134 and 141-163; these read HACH…TKMH and FACE…NNIH. The segment at 226-304 is disordered; the sequence is EFDTTPPPIL…PPPVRKDVEK (79 aa). The segment covering 280–293 has biased composition (low complexity); that stretch reads SPKGSLPSSSASSV. C2H2-type zinc fingers lie at residues 327–349, 355–379, 451–476, and 487–510; these read QRCP…SGGH, YICP…YILH, KKCN…VKTH, and FLCL…LIEH. Residues 544 to 563 are disordered; sequence VKEEPKEADGDESGDESFDS. Acidic residues predominate over residues 552–561; the sequence is DGDESGDESF. C2H2-type zinc fingers lie at residues 585–607, 613–635, 709–731, 737–759, 794–816, and 823–845; these read FCCN…YDKH, FKCQ…EKLH, FQCT…KKRH, YRCV…LKQH, YCCD…HRNH, and NICS…TIIH. Positions 865 to 1002 are disordered; it reads RPVSSLTDLN…ESPEPDESVE (138 aa). Positions 874 to 897 are enriched in basic and acidic residues; the sequence is NSEKMNERKSTKRKMLDKVEKMEV. A compositionally biased stretch (acidic residues) spans 898–907; that stretch reads GEDEEDDEES. Over residues 908-920 the composition is skewed to basic and acidic residues; sequence VDKGTDDGDYKQR. Polar residues predominate over residues 956-979; the sequence is NRINYSLLSKNGSGKPTPSTSSAN. 6 C2H2-type zinc fingers span residues 1022-1044, 1053-1075, 1104-1126, 1162-1184, 1190-1212, and 1261-1284; these read LKCP…RYYH, YACS…LKLH, YYCK…SAYH, KYCK…LDRH, YKCY…QLNH, and LKCP…SVHH.

Expressed in neurons.

It is found in the nucleus. Functionally, probable transcriptional regulator, which participates in the transcriptional repression of the presenilin protein hop-1. Might play a role in the oxidative stress response. The chain is Suppressor of presenilin protein 4 (spr-4) from Caenorhabditis elegans.